The primary structure comprises 248 residues: Ubiquinone biosynthesis O-methyltransferase (248 aa).

S-adenosyl-L-methionine is bound by residues R41, G72, D93, and M136.

This sequence belongs to the methyltransferase superfamily. UbiG/COQ3 family.

The enzyme catalyses a 3-demethylubiquinol + S-adenosyl-L-methionine = a ubiquinol + S-adenosyl-L-homocysteine + H(+). The catalysed reaction is a 3-(all-trans-polyprenyl)benzene-1,2-diol + S-adenosyl-L-methionine = a 2-methoxy-6-(all-trans-polyprenyl)phenol + S-adenosyl-L-homocysteine + H(+). Its pathway is cofactor biosynthesis; ubiquinone biosynthesis. In terms of biological role, O-methyltransferase that catalyzes the 2 O-methylation steps in the ubiquinone biosynthetic pathway. The polypeptide is Ubiquinone biosynthesis O-methyltransferase (Brucella anthropi (strain ATCC 49188 / DSM 6882 / CCUG 24695 / JCM 21032 / LMG 3331 / NBRC 15819 / NCTC 12168 / Alc 37) (Ochrobactrum anthropi)).